Consider the following 652-residue polypeptide: DNA mismatch repair protein MutL (652 aa).

Disordered regions lie at residues 357–377 (LGAN…NYPS) and 425–457 (PDKG…NSTD). Positions 365–375 (SHSSNTPTLNY) are enriched in polar residues.

This sequence belongs to the DNA mismatch repair MutL/HexB family.

This protein is involved in the repair of mismatches in DNA. It is required for dam-dependent methyl-directed DNA mismatch repair. May act as a 'molecular matchmaker', a protein that promotes the formation of a stable complex between two or more DNA-binding proteins in an ATP-dependent manner without itself being part of a final effector complex. This Colwellia psychrerythraea (strain 34H / ATCC BAA-681) (Vibrio psychroerythus) protein is DNA mismatch repair protein MutL.